The primary structure comprises 172 residues: MALLPILEFPDPRLRTIAKPVAKVDQRIRTLIDDMFETMYDAPGIGLAATQVNVHEQVLVIDLGEETKEPMVFINPSIEILDQEHYEYEEGCLSVPGFYEQVSRPKHIRVTALDRDGKEFVIEPEGLLAVCVQHEMDHLNGKLFVDYVSNIKRQRIRKKLEKQHRQAAQSVG.

Cysteine 92 and histidine 134 together coordinate Fe cation. The active site involves glutamate 135. Histidine 138 contacts Fe cation.

Belongs to the polypeptide deformylase family. Fe(2+) is required as a cofactor.

It catalyses the reaction N-terminal N-formyl-L-methionyl-[peptide] + H2O = N-terminal L-methionyl-[peptide] + formate. Removes the formyl group from the N-terminal Met of newly synthesized proteins. Requires at least a dipeptide for an efficient rate of reaction. N-terminal L-methionine is a prerequisite for activity but the enzyme has broad specificity at other positions. The protein is Peptide deformylase of Saccharophagus degradans (strain 2-40 / ATCC 43961 / DSM 17024).